The following is a 697-amino-acid chain: Glycine--tRNA ligase beta subunit (697 aa).

Belongs to the class-II aminoacyl-tRNA synthetase family. In terms of assembly, tetramer of two alpha and two beta subunits.

The protein localises to the cytoplasm. It carries out the reaction tRNA(Gly) + glycine + ATP = glycyl-tRNA(Gly) + AMP + diphosphate. The polypeptide is Glycine--tRNA ligase beta subunit (Ralstonia nicotianae (strain ATCC BAA-1114 / GMI1000) (Ralstonia solanacearum)).